The primary structure comprises 426 residues: Histidine--tRNA ligase 1 (426 aa).

Belongs to the class-II aminoacyl-tRNA synthetase family. As to quaternary structure, homodimer.

The protein localises to the cytoplasm. The enzyme catalyses tRNA(His) + L-histidine + ATP = L-histidyl-tRNA(His) + AMP + diphosphate + H(+). The protein is Histidine--tRNA ligase 1 of Bacillus cereus (strain ATCC 14579 / DSM 31 / CCUG 7414 / JCM 2152 / NBRC 15305 / NCIMB 9373 / NCTC 2599 / NRRL B-3711).